A 270-amino-acid polypeptide reads, in one-letter code: NAD(P)H-hydrate epimerase (270 aa).

A YjeF N-terminal domain is found at 25-234 (FQQLMDLMQN…DLLAPEAIYQ (210 aa)). 73-77 (DNGGQ) provides a ligand contact to (6S)-NADPHX. 2 residues coordinate K(+): Asn74 and Asp144. (6S)-NADPHX-binding positions include 148–154 (GVGLYGH) and Glu177. Thr180 provides a ligand contact to K(+).

This sequence belongs to the NnrE/AIBP family. The cofactor is K(+).

It carries out the reaction (6R)-NADHX = (6S)-NADHX. It catalyses the reaction (6R)-NADPHX = (6S)-NADPHX. Catalyzes the epimerization of the S- and R-forms of NAD(P)HX, a damaged form of NAD(P)H that is a result of enzymatic or heat-dependent hydration. This is a prerequisite for the S-specific NAD(P)H-hydrate dehydratase to allow the repair of both epimers of NAD(P)HX. The polypeptide is NAD(P)H-hydrate epimerase (Legionella pneumophila subsp. pneumophila (strain Philadelphia 1 / ATCC 33152 / DSM 7513)).